The primary structure comprises 242 residues: tRNA (guanine-N(7)-)-methyltransferase (242 aa).

S-adenosyl-L-methionine is bound by residues Glu-66, Glu-91, Asp-118, and Asp-141. Asp-141 is an active-site residue. Substrate contacts are provided by residues Lys-145, Asp-177, and Thr-214–Glu-217.

The protein belongs to the class I-like SAM-binding methyltransferase superfamily. TrmB family. Monomer.

The enzyme catalyses guanosine(46) in tRNA + S-adenosyl-L-methionine = N(7)-methylguanosine(46) in tRNA + S-adenosyl-L-homocysteine. It functions in the pathway tRNA modification; N(7)-methylguanine-tRNA biosynthesis. Functionally, catalyzes the formation of N(7)-methylguanine at position 46 (m7G46) in tRNA. This chain is tRNA (guanine-N(7)-)-methyltransferase, found in Buchnera aphidicola subsp. Baizongia pistaciae (strain Bp).